The chain runs to 372 residues: Alanine dehydrogenase 1 (372 aa).

Residue His94 is part of the active site. 170–200 (TYVIFGGGVAATNAANVALGLNAKVIIIELN) contributes to the NAD(+) binding site.

Belongs to the AlaDH/PNT family.

The catalysed reaction is L-alanine + NAD(+) + H2O = pyruvate + NH4(+) + NADH + H(+). It functions in the pathway amino-acid degradation; L-alanine degradation via dehydrogenase pathway; NH(3) and pyruvate from L-alanine: step 1/1. In terms of biological role, may play a role in cell wall synthesis as L-alanine is an important constituent of the peptidoglycan layer. This chain is Alanine dehydrogenase 1 (ald1), found in Staphylococcus aureus (strain MRSA252).